Here is a 1202-residue protein sequence, read N- to C-terminus: Voltage-gated inwardly rectifying potassium channel KCNH6 (1202 aa).

Topologically, residues 1-405 are cytoplasmic; the sequence is MGSAALPHAR…YSPFKAVWDW (405 aa). The 49-residue stretch at 36–84 folds into the PAS domain; sequence IIYCNDGFCEMFGYSRVEVMQRPCTCDFLTGPDTTKSSIAQLTQALLGS. Positions 87–139 constitute a PAC domain; that stretch reads CKLEILYYRKDTSCFRCLVDVVPVKNEDGVVIMFILNFEDLAQLIAKSSGRSL. 2 disordered regions span residues 203–243 and 285–315; these read ENCV…LGPR and ERRA…SDSD. Basic and acidic residues predominate over residues 213-222; sequence LLEKERRPSL. The helical transmembrane segment at 406 to 426 threads the bilayer; the sequence is LILLLVIYTAVFTPYSAAFLL. The Extracellular segment spans residues 427 to 443; it reads NEEQGEEKHWNCSYSCD. N-linked (GlcNAc...) asparagine glycosylation is present at asparagine 437. The chain crosses the membrane as a helical span at residues 444–464; that stretch reads PLNIIDLIVDIMFIVDIVINF. Over 465–485 the chain is Cytoplasmic; the sequence is RTTYVNINDEVVSHPGKIAIH. Residues 486–506 form a helical membrane-spanning segment; that stretch reads YFKGWFLIDMVAAIPFDLLIF. The Extracellular portion of the chain corresponds to 507-515; the sequence is RSGSDETTT. The chain crosses the membrane as a helical; Voltage-sensor span at residues 516–536; it reads LIGLLKTARLLRLVRVARKLD. Residues 537-543 are Cytoplasmic-facing; the sequence is RYSEYGA. A helical membrane pass occupies residues 544–564; it reads AVLFLLMCTFALIAHWLACIW. Residues 565 to 608 are Extracellular-facing; it reads YAIGNVERPYMEHKIGWLDNLGDQIGKRYNDSDLSSGPSIKDKY. An N-linked (GlcNAc...) asparagine glycan is attached at asparagine 594. Positions 609–629 form an intramembrane region, pore-forming; sequence VTALYFTFSSLTSVGFGNVSP. A Selectivity filter motif is present at residues 621–626; sequence SVGFGN. The Extracellular segment spans residues 630–635; the sequence is NTNSEK. Residues 636 to 656 form a helical membrane-spanning segment; it reads IFSICVMLIGSLMYASIFGNV. Residues 657-1202 lie on the Cytoplasmic side of the membrane; sequence SAIIQRLYSG…HLSDPVLPGS (546 aa). The segment at 739 to 839 is cNMP-binding domain; that stretch reads AFRGASKGCL…IQREDLLEVL (101 aa). Disordered regions lie at residues 912-948, 1092-1112, and 1140-1202; these read LTNP…GSPT, TPCA…PSYA, and TVYS…LPGS. Positions 928 to 937 are enriched in polar residues; sequence GSSTTPCSQT. The span at 1179-1195 shows a compositional bias: basic and acidic residues; sequence EHLEASSEHQDIQRHLS.

This sequence belongs to the potassium channel family. H (Eag) (TC 1.A.1.20) subfamily. Kv11.2/KCNH6 sub-subfamily. In terms of assembly, the potassium channel is probably composed of a homo- or heterotetrameric complex of pore-forming alpha subunits that can associate only within their subfamily.

Its subcellular location is the cell membrane. The catalysed reaction is K(+)(in) = K(+)(out). Pore-forming (alpha) subunit of voltage-gated inwardly rectifying potassium channel. Characterized by unusual gating kinetics by producing relatively small outward currents during membrane depolarization and large inward currents during subsequent repolarization which reflect a rapid inactivation during depolarization and quick recovery from inactivation but slow deactivation (closing) during repolarization. Activates even more slowly than KCNH2. The polypeptide is Voltage-gated inwardly rectifying potassium channel KCNH6 (Gallus gallus (Chicken)).